A 1066-amino-acid chain; its full sequence is Exportin-T (1066 aa).

It belongs to the exportin family.

It localises to the nucleus. The protein localises to the cytoplasm. Functionally, tRNA nucleus export receptor which facilitates tRNA translocation across the nuclear pore complex. Involved in pre-tRNA splicing, probably by affecting the interaction of pre-tRNA with splicing endonuclease. This Laccaria bicolor (strain S238N-H82 / ATCC MYA-4686) (Bicoloured deceiver) protein is Exportin-T (LOS1).